Consider the following 161-residue polypeptide: Ribosome maturation factor RimP (161 aa).

This sequence belongs to the RimP family.

Its subcellular location is the cytoplasm. Its function is as follows. Required for maturation of 30S ribosomal subunits. The sequence is that of Ribosome maturation factor RimP from Rickettsia felis (strain ATCC VR-1525 / URRWXCal2) (Rickettsia azadi).